Reading from the N-terminus, the 490-residue chain is Glutamyl-tRNA(Gln) amidotransferase subunit A (490 aa).

Active-site charge relay system residues include lysine 78 and serine 158. A disordered region spans residues 131-159; the sequence is SNETSRFGPPINPWRRKGDNAGLTPGGSS. The Acyl-ester intermediate role is filled by serine 182.

It belongs to the amidase family. GatA subfamily. As to quaternary structure, heterotrimer of A, B and C subunits.

The catalysed reaction is L-glutamyl-tRNA(Gln) + L-glutamine + ATP + H2O = L-glutaminyl-tRNA(Gln) + L-glutamate + ADP + phosphate + H(+). Its function is as follows. Allows the formation of correctly charged Gln-tRNA(Gln) through the transamidation of misacylated Glu-tRNA(Gln) in organisms which lack glutaminyl-tRNA synthetase. The reaction takes place in the presence of glutamine and ATP through an activated gamma-phospho-Glu-tRNA(Gln). In Hyphomonas neptunium (strain ATCC 15444), this protein is Glutamyl-tRNA(Gln) amidotransferase subunit A.